We begin with the raw amino-acid sequence, 213 residues long: Kynurenine formamidase (213 aa).

W20 is a substrate binding site. 3 residues coordinate Zn(2+): H50, H54, and D56. The Proton donor/acceptor role is filled by H60. Residues H161 and E173 each contribute to the Zn(2+) site.

This sequence belongs to the Cyclase 1 superfamily. KynB family. As to quaternary structure, homodimer. Requires Zn(2+) as cofactor.

It carries out the reaction N-formyl-L-kynurenine + H2O = L-kynurenine + formate + H(+). It participates in amino-acid degradation; L-tryptophan degradation via kynurenine pathway; L-kynurenine from L-tryptophan: step 2/2. In terms of biological role, catalyzes the hydrolysis of N-formyl-L-kynurenine to L-kynurenine, the second step in the kynurenine pathway of tryptophan degradation. This is Kynurenine formamidase from Pseudomonas aeruginosa (strain ATCC 15692 / DSM 22644 / CIP 104116 / JCM 14847 / LMG 12228 / 1C / PRS 101 / PAO1).